An 823-amino-acid chain; its full sequence is Translation initiation factor IF-2 (823 aa).

Disordered regions lie at residues 30–66 and 156–192; these read VPPS…DDKR and TPSH…IKKV. The segment covering 36–48 has biased composition (polar residues); the sequence is RGTSTGKSFTTVE. A compositionally biased stretch (basic and acidic residues) spans 56–66; that stretch reads PGEYISHDDKR. Residues 322–491 enclose the tr-type G domain; the sequence is PRPPVVTVMG…LLLAEMLELS (170 aa). Residues 331 to 338 are G1; that stretch reads GHVDHGKT. 331-338 lines the GTP pocket; it reads GHVDHGKT. The tract at residues 356-360 is G2; sequence GITQH. Residues 377 to 380 are G3; sequence DTPG. Residues 377–381 and 431–434 contribute to the GTP site; these read DTPGH and NKID. Residues 431-434 form a G4 region; sequence NKID. The G5 stretch occupies residues 467-469; sequence SAK.

It belongs to the TRAFAC class translation factor GTPase superfamily. Classic translation factor GTPase family. IF-2 subfamily.

Its subcellular location is the cytoplasm. Its function is as follows. One of the essential components for the initiation of protein synthesis. Protects formylmethionyl-tRNA from spontaneous hydrolysis and promotes its binding to the 30S ribosomal subunits. Also involved in the hydrolysis of GTP during the formation of the 70S ribosomal complex. The protein is Translation initiation factor IF-2 of Anaplasma phagocytophilum (strain HZ).